The sequence spans 218 residues: Peptide methionine sulfoxide reductase MsrA (218 aa).

Cys57 is a catalytic residue.

The protein belongs to the MsrA Met sulfoxide reductase family.

It carries out the reaction L-methionyl-[protein] + [thioredoxin]-disulfide + H2O = L-methionyl-(S)-S-oxide-[protein] + [thioredoxin]-dithiol. It catalyses the reaction [thioredoxin]-disulfide + L-methionine + H2O = L-methionine (S)-S-oxide + [thioredoxin]-dithiol. Has an important function as a repair enzyme for proteins that have been inactivated by oxidation. Catalyzes the reversible oxidation-reduction of methionine sulfoxide in proteins to methionine. The protein is Peptide methionine sulfoxide reductase MsrA of Brucella melitensis biotype 2 (strain ATCC 23457).